The following is a 215-amino-acid chain: Nascent polypeptide-associated complex subunit alpha-2 (215 aa).

Residues 1 to 51 (MPGEATETVPATEQELPQSQAETGSGTASDSGESVPGIEEQDSTQTTTQKA) form a disordered region. A compositionally biased stretch (polar residues) spans 9–32 (VPATEQELPQSQAETGSGTASDSG). Phosphoserine occurs at positions 43 and 132. The region spanning 70–135 (SRSEKRARKA…AKIQDLSQQA (66 aa)) is the NAC-A/B domain. Residue K142 is modified to N6-acetyllysine; alternate. K142 is covalently cross-linked (Glycyl lysine isopeptide (Lys-Gly) (interchain with G-Cter in SUMO2); alternate). Residue T161 is modified to Phosphothreonine. Phosphoserine occurs at positions 166, 186, 191, and 203. The 38-residue stretch at 176-213 (VEVKDVKLVMSQANVSRAKAVRALKNNSNDIVNAIMEL) folds into the UBA domain. T214 carries the phosphothreonine modification.

The protein belongs to the NAC-alpha family. In terms of assembly, part of the nascent polypeptide-associated complex (NAC), consisting of NACA and BTF3. NAC associates with ribosomes through the BTF3 subunit. Both subunits can contact nascent polypeptide chains. As to expression, expressed specifically in testis and skeletal muscle.

Its subcellular location is the cytoplasm. It localises to the nucleus. In terms of biological role, prevents inappropriate targeting of non-secretory polypeptides to the endoplasmic reticulum (ER). Binds to nascent polypeptide chains as they emerge from the ribosome and blocks their interaction with the signal recognition particle (SRP), which normally targets nascent secretory peptides to the ER. Also reduces the inherent affinity of ribosomes for protein translocation sites in the ER membrane (M sites). This is Nascent polypeptide-associated complex subunit alpha-2 (NACA2) from Homo sapiens (Human).